The primary structure comprises 88 residues: Putative sulfur carrier protein AF_0552 (88 aa).

The protein belongs to the sulfur carrier protein CysO family.

The chain is Putative sulfur carrier protein AF_0552 from Archaeoglobus fulgidus (strain ATCC 49558 / DSM 4304 / JCM 9628 / NBRC 100126 / VC-16).